We begin with the raw amino-acid sequence, 184 residues long: Flagellar transcriptional regulator FlhC (184 aa).

Zn(2+) is bound by residues Cys144, Cys147, Cys163, and Cys166.

Belongs to the FlhC family. In terms of assembly, heterohexamer composed of two FlhC and four FlhD subunits. Each FlhC binds a FlhD dimer, forming a heterotrimer, and a hexamer assembles by dimerization of two heterotrimers. Requires Zn(2+) as cofactor.

It is found in the cytoplasm. Functions in complex with FlhD as a master transcriptional regulator that regulates transcription of several flagellar and non-flagellar operons by binding to their promoter region. Activates expression of class 2 flagellar genes, including fliA, which is a flagellum-specific sigma factor that turns on the class 3 genes. Also regulates genes whose products function in a variety of physiological pathways. The polypeptide is Flagellar transcriptional regulator FlhC (Verminephrobacter eiseniae (strain EF01-2)).